A 93-amino-acid chain; its full sequence is Cobalt transport protein CbiN (93 aa).

The next 2 helical transmembrane spans lie at 5-25 (LILL…NHGG) and 63-83 (LLFT…LGYA).

It belongs to the CbiN family. Forms an energy-coupling factor (ECF) transporter complex composed of an ATP-binding protein (A component, CbiO), a transmembrane protein (T component, CbiQ) and 2 possible substrate-capture proteins (S components, CbiM and CbiN) of unknown stoichimetry.

Its subcellular location is the cell inner membrane. Its pathway is cofactor biosynthesis; adenosylcobalamin biosynthesis. Functionally, part of the energy-coupling factor (ECF) transporter complex CbiMNOQ involved in cobalt import. The chain is Cobalt transport protein CbiN from Klebsiella pneumoniae subsp. pneumoniae (strain ATCC 700721 / MGH 78578).